The following is a 320-amino-acid chain: Quinolinate synthase (320 aa).

Iminosuccinate contacts are provided by His-34 and Ser-51. Cys-96 serves as a coordination point for [4Fe-4S] cluster. Iminosuccinate is bound by residues 122–124 and Ser-139; that span reads YIN. A [4Fe-4S] cluster-binding site is contributed by Cys-182. Iminosuccinate contacts are provided by residues 208–210 and Thr-225; that span reads HPE. Cys-276 contacts [4Fe-4S] cluster.

Belongs to the quinolinate synthase family. Type 2 subfamily. Requires [4Fe-4S] cluster as cofactor.

The protein resides in the cytoplasm. It catalyses the reaction iminosuccinate + dihydroxyacetone phosphate = quinolinate + phosphate + 2 H2O + H(+). The protein operates within cofactor biosynthesis; NAD(+) biosynthesis; quinolinate from iminoaspartate: step 1/1. Catalyzes the condensation of iminoaspartate with dihydroxyacetone phosphate to form quinolinate. In Synechococcus sp. (strain ATCC 27144 / PCC 6301 / SAUG 1402/1) (Anacystis nidulans), this protein is Quinolinate synthase.